The primary structure comprises 179 residues: Large ribosomal subunit protein uL5 (179 aa).

Belongs to the universal ribosomal protein uL5 family. In terms of assembly, part of the 50S ribosomal subunit; part of the 5S rRNA/L5/L18/L25 subcomplex. Contacts the 5S rRNA and the P site tRNA. Forms a bridge to the 30S subunit in the 70S ribosome.

Functionally, this is one of the proteins that bind and probably mediate the attachment of the 5S RNA into the large ribosomal subunit, where it forms part of the central protuberance. In the 70S ribosome it contacts protein S13 of the 30S subunit (bridge B1b), connecting the 2 subunits; this bridge is implicated in subunit movement. Contacts the P site tRNA; the 5S rRNA and some of its associated proteins might help stabilize positioning of ribosome-bound tRNAs. The polypeptide is Large ribosomal subunit protein uL5 (Anaplasma marginale (strain Florida)).